A 476-amino-acid chain; its full sequence is Thyroid receptor-interacting protein 6 (476 aa).

A compositionally biased stretch (pro residues) spans 1–12 (MSGPTWLPPKQP). Disordered regions lie at residues 1-93 (MSGP…PGSL) and 108-253 (NGGR…QPPE). Residue arginine 25 is modified to Asymmetric dimethylarginine; alternate. Arginine 25 is modified (omega-N-methylarginine; alternate). Tyrosine 55 carries the post-translational modification Phosphotyrosine; by SRC. Phosphoserine is present on serine 92. Arginine 111 carries the omega-N-methylarginine modification. Phosphoserine is present on serine 142. Over residues 152–167 (PTPASYTTASTPAGPA) the composition is skewed to low complexity. An omega-N-methylarginine mark is found at arginine 179 and arginine 186. Serine 189 is subject to Phosphoserine. Arginine 205, arginine 236, and arginine 238 each carry omega-N-methylarginine. Position 249 is a phosphoserine (serine 249). LIM zinc-binding domains are found at residues 279 to 316 (CGGCGEDVVGDGAGVVALDRVFHVGCFVCSTCRAQLRG), 339 to 398 (CATC…FAPR), and 399 to 467 (CSVC…RIQE). Residues 469 to 476 (SATVTTDC) are interaction with MAGI1 and PTPN13.

It belongs to the zyxin/ajuba family. In terms of assembly, specifically interacts with the ligand binding domain of the thyroid receptor (TR) in the presence of thyroid hormone. Interacts (via the third LIM domain and C-terminus) with PTPN13 (via the second PDZ domain). Interacts (via the second LIM domain or via the third LIM domain plus C-terminus) with PDLIM4 (via PDZ domain). Found in a complex with PTPN13 and PDLIM4. Interacts with SVIL isoform 2. Interacts with LPAR2 but not other LPA receptors. Interacts with PRKAA2. Interacts with MAGI1. Interacts with SCRIB. In case of infection, interacts with S.typhimurium protein sseI. Phosphorylation at Tyr-55 by SRC is required for enhancement of lysophosphatidic acid-induced cell migration. Tyr-55 is dephosphorylated by PTPN13. As to expression, abundantly expressed in kidney, liver and lung. Lower levels in heart, placenta and pancreas. Expressed in colonic epithelial cells. Up-regulated in colonic tumors.

Its subcellular location is the cytoplasm. It localises to the cytoskeleton. The protein localises to the cell junction. The protein resides in the focal adhesion. It is found in the nucleus. Its function is as follows. Relays signals from the cell surface to the nucleus to weaken adherens junction and promote actin cytoskeleton reorganization and cell invasiveness. Involved in lysophosphatidic acid-induced cell adhesion and migration. Acts as a transcriptional coactivator for NF-kappa-B and JUN, and mediates the transrepression of these transcription factors induced by glucocorticoid receptor. This Homo sapiens (Human) protein is Thyroid receptor-interacting protein 6 (TRIP6).